The chain runs to 395 residues: Type II restriction enzyme BsuFI (395 aa).

In terms of assembly, homodimer. Mg(2+) serves as cofactor.

The enzyme catalyses Endonucleolytic cleavage of DNA to give specific double-stranded fragments with terminal 5'-phosphates.. Its function is as follows. A P subtype restriction enzyme that recognizes the double-stranded sequence 5'-CCGG-3' and cleaves after C-1. The protein is Type II restriction enzyme BsuFI (hsdFR) of Bacillus subtilis.